The chain runs to 208 residues: Proheparin-binding EGF-like growth factor (208 aa).

The first 23 residues, 1–23, serve as a signal peptide directing secretion; the sequence is MKLLPSVVLKLFLAAVLSALVTG. A propeptide spanning residues 24–62 is cleaved from the precursor; sequence ESLERLRRGLAAATSNPDPPTGTTNQLLPTGADRAQEVQ. Topologically, residues 24-160 are extracellular; sequence ESLERLRRGL…ENPLYTYDHT (137 aa). The interval 82–103 is disordered; that stretch reads ALATPGKEKNGKKKRKGKGLGK. O-linked (GalNAc...) threonine glycosylation is present at threonine 85. Residues 91–102 show a composition bias toward basic residues; the sequence is NGKKKRKGKGLG. Residues 104–144 enclose the EGF-like domain; it reads KRDPCLKKYKDYCIHGECRYLKELRIPSCHCLPGYHGQRCH. 3 disulfides stabilise this stretch: cysteine 108/cysteine 121, cysteine 116/cysteine 132, and cysteine 134/cysteine 143. The propeptide at 149-208 is C-terminal; the sequence is PVENPLYTYDHTTVLAVVAVVLSSVCLLVIVGLLMFRYHRRGGYDLESEEKVKLGMASSH. A helical membrane pass occupies residues 161-184; the sequence is TVLAVVAVVLSSVCLLVIVGLLMF. Residues 185-208 lie on the Cytoplasmic side of the membrane; it reads RYHRRGGYDLESEEKVKLGMASSH.

As to quaternary structure, interacts with FBLN1. Interacts with EGFR and ERBB4. In terms of processing, O-glycosylated. In terms of tissue distribution, most abundant in skeletal muscle, lung, spleen brain and heart.

It localises to the secreted. The protein localises to the extracellular space. The protein resides in the cell membrane. Functionally, growth factor that mediates its effects via EGFR, ERBB2 and ERBB4. Required for normal cardiac valve formation and normal heart function. Promotes smooth muscle cell proliferation. May be involved in macrophage-mediated cellular proliferation. It is mitogenic for fibroblasts, but not endothelial cells. It is able to bind EGF receptor/EGFR with higher affinity than EGF itself and is a far more potent mitogen for smooth muscle cells than EGF. Also acts as a diphtheria toxin receptor. The polypeptide is Proheparin-binding EGF-like growth factor (Hbegf) (Rattus norvegicus (Rat)).